Reading from the N-terminus, the 428-residue chain is Flotillin-2 (428 aa).

G2 carries N-myristoyl glycine lipidation. A lipid anchor (S-palmitoyl cysteine; by ZDHHC5) is attached at C4. Residue C19 is the site of S-palmitoyl cysteine attachment. C20 carries the S-palmitoyl cysteine; by ZDHHC5 lipid modification. S405 is subject to Phosphoserine.

Belongs to the band 7/mec-2 family. Flotillin subfamily. Heterooligomeric complex of flotillin-1 and flotillin-2 and caveolin-1 and caveolin-2. Interacts with ECPAS. ZDHHC5-catalyzed palmitoylation predominantly occurs at Cys-4. ZDHHC5-catalyzed palmitoylation may be required for the formation of higher-order complexes and for neurite outgrowth in cultured neural stem cells. In skin, expressed in epidermis and epidermal appendages but not in dermis. Expressed in all layers of the epidermis except the basal layer. In hair follicles, expressed in the suprabasal layer but not the basal layer. Also expressed in melanoma and carcinoma cell lines, fibroblasts and foreskin melanocytes.

The protein localises to the cell membrane. The protein resides in the membrane. It localises to the caveola. It is found in the endosome. Its function is as follows. May act as a scaffolding protein within caveolar membranes, functionally participating in formation of caveolae or caveolae-like vesicles. May be involved in epidermal cell adhesion and epidermal structure and function. The polypeptide is Flotillin-2 (FLOT2) (Homo sapiens (Human)).